The sequence spans 497 residues: Glycerol kinase (497 aa).

T12 lines the ADP pocket. Residues T12, T13, and S14 each contribute to the ATP site. A sn-glycerol 3-phosphate-binding site is contributed by T12. R16 is a binding site for ADP. Residues R82, E83, Y134, and D243 each contribute to the sn-glycerol 3-phosphate site. The glycerol site is built by R82, E83, Y134, D243, and Q244. The ADP site is built by T265 and G308. 4 residues coordinate ATP: T265, G308, Q312, and G411. G411 serves as a coordination point for ADP.

This sequence belongs to the FGGY kinase family.

It catalyses the reaction glycerol + ATP = sn-glycerol 3-phosphate + ADP + H(+). It participates in polyol metabolism; glycerol degradation via glycerol kinase pathway; sn-glycerol 3-phosphate from glycerol: step 1/1. Its activity is regulated as follows. Inhibited by fructose 1,6-bisphosphate (FBP). Key enzyme in the regulation of glycerol uptake and metabolism. Catalyzes the phosphorylation of glycerol to yield sn-glycerol 3-phosphate. The sequence is that of Glycerol kinase from Rhizobium meliloti (strain 1021) (Ensifer meliloti).